The chain runs to 2545 residues: uncharacterized protein (2545 aa).

A helical transmembrane segment spans residues 17 to 37; sequence INFSITFIFINILLVFFSTFL. Residues 131 to 161 adopt a coiled-coil conformation; that stretch reads LENIKQELHIIDRELKNILQKEENLQLINEE. 3 disordered regions span residues 348 to 462, 587 to 616, and 1214 to 1238; these read NVNQ…PKKT, NHNM…SNDI, and RNSS…ENRR. Composition is skewed to basic and acidic residues over residues 354–371, 380–391, and 401–413; these read SSDH…KNDQ, KNEKNEENEKNG, and QNGK…KNEQ. A compositionally biased stretch (low complexity) spans 414 to 435; that stretch reads NEQNDQIEQNYQNDPNDQNDQN. Basic and acidic residues-rich tracts occupy residues 437–454 and 590–599; these read QNEK…KKNE and MQRENTREDP. Residues 600-613 show a composition bias toward polar residues; it reads SNNMDYTNKSTSDS. Over residues 1219-1238 the composition is skewed to basic and acidic residues; it reads NKKERDSKKDRDSVYDENRR. Positions 2303–2337 form a coiled coil; sequence KEKYKFQMNMKDSEINQLQNNLIDEFKELNEVSKL.

It is found in the membrane. This is an uncharacterized protein from Plasmodium falciparum (isolate 3D7).